Here is a 968-residue protein sequence, read N- to C-terminus: RNA polymerase-associated protein RapA (968 aa).

Positions aspartate 164–asparagine 334 constitute a Helicase ATP-binding domain. Position 177 to 184 (aspartate 177 to threonine 184) interacts with ATP. The DEAH box signature appears at aspartate 280 to histidine 283. Residues arginine 490–aspartate 644 form the Helicase C-terminal domain.

The protein belongs to the SNF2/RAD54 helicase family. RapA subfamily. Interacts with the RNAP. Has a higher affinity for the core RNAP than for the holoenzyme. Its ATPase activity is stimulated by binding to RNAP.

Transcription regulator that activates transcription by stimulating RNA polymerase (RNAP) recycling in case of stress conditions such as supercoiled DNA or high salt concentrations. Probably acts by releasing the RNAP, when it is trapped or immobilized on tightly supercoiled DNA. Does not activate transcription on linear DNA. Probably not involved in DNA repair. The sequence is that of RNA polymerase-associated protein RapA from Klebsiella pneumoniae subsp. pneumoniae (strain ATCC 700721 / MGH 78578).